Here is a 295-residue protein sequence, read N- to C-terminus: Pyridoxal 5'-phosphate synthase subunit PdxS (295 aa).

Residue D25 participates in D-ribose 5-phosphate binding. The active-site Schiff-base intermediate with D-ribose 5-phosphate is K82. A D-ribose 5-phosphate-binding site is contributed by G154. D-glyceraldehyde 3-phosphate is bound at residue R166. Residues G215 and 236-237 (GS) contribute to the D-ribose 5-phosphate site.

This sequence belongs to the PdxS/SNZ family. As to quaternary structure, in the presence of PdxT, forms a dodecamer of heterodimers.

It catalyses the reaction aldehydo-D-ribose 5-phosphate + D-glyceraldehyde 3-phosphate + L-glutamine = pyridoxal 5'-phosphate + L-glutamate + phosphate + 3 H2O + H(+). Its pathway is cofactor biosynthesis; pyridoxal 5'-phosphate biosynthesis. Functionally, catalyzes the formation of pyridoxal 5'-phosphate from ribose 5-phosphate (RBP), glyceraldehyde 3-phosphate (G3P) and ammonia. The ammonia is provided by the PdxT subunit. Can also use ribulose 5-phosphate and dihydroxyacetone phosphate as substrates, resulting from enzyme-catalyzed isomerization of RBP and G3P, respectively. The chain is Pyridoxal 5'-phosphate synthase subunit PdxS from Bacillus cereus (strain B4264).